The chain runs to 664 residues: Chaperone protein DnaK (664 aa).

At Thr201 the chain carries Phosphothreonine; by autocatalysis. Disordered stretches follow at residues 516–538 (DAEK…NEAD) and 578–664 (APVE…KPND). The span at 578 to 592 (APVEKIKDASEELSR) shows a compositional bias: basic and acidic residues. 2 stretches are compositionally biased toward low complexity: residues 600–617 (AMQS…ANAQ) and 638–649 (AGNSASSNSNNE).

This sequence belongs to the heat shock protein 70 family.

In terms of biological role, acts as a chaperone. In Chlamydia caviae (strain ATCC VR-813 / DSM 19441 / 03DC25 / GPIC) (Chlamydophila caviae), this protein is Chaperone protein DnaK.